The chain runs to 313 residues: 4-hydroxy-3-methylbut-2-enyl diphosphate reductase (313 aa).

Residue Cys-12 coordinates [4Fe-4S] cluster. Residues His-41 and His-74 each contribute to the (2E)-4-hydroxy-3-methylbut-2-enyl diphosphate site. Dimethylallyl diphosphate contacts are provided by His-41 and His-74. Residues His-41 and His-74 each coordinate isopentenyl diphosphate. Cys-96 contributes to the [4Fe-4S] cluster binding site. (2E)-4-hydroxy-3-methylbut-2-enyl diphosphate is bound at residue His-124. His-124 provides a ligand contact to dimethylallyl diphosphate. His-124 lines the isopentenyl diphosphate pocket. Catalysis depends on Glu-126, which acts as the Proton donor. Thr-167 contributes to the (2E)-4-hydroxy-3-methylbut-2-enyl diphosphate binding site. Cys-197 is a binding site for [4Fe-4S] cluster. 4 residues coordinate (2E)-4-hydroxy-3-methylbut-2-enyl diphosphate: Ser-225, Ser-226, Asn-227, and Ser-269. Positions 225, 226, 227, and 269 each coordinate dimethylallyl diphosphate. Isopentenyl diphosphate contacts are provided by Ser-225, Ser-226, Asn-227, and Ser-269.

The protein belongs to the IspH family. [4Fe-4S] cluster serves as cofactor.

The enzyme catalyses isopentenyl diphosphate + 2 oxidized [2Fe-2S]-[ferredoxin] + H2O = (2E)-4-hydroxy-3-methylbut-2-enyl diphosphate + 2 reduced [2Fe-2S]-[ferredoxin] + 2 H(+). It catalyses the reaction dimethylallyl diphosphate + 2 oxidized [2Fe-2S]-[ferredoxin] + H2O = (2E)-4-hydroxy-3-methylbut-2-enyl diphosphate + 2 reduced [2Fe-2S]-[ferredoxin] + 2 H(+). Its pathway is isoprenoid biosynthesis; dimethylallyl diphosphate biosynthesis; dimethylallyl diphosphate from (2E)-4-hydroxy-3-methylbutenyl diphosphate: step 1/1. The protein operates within isoprenoid biosynthesis; isopentenyl diphosphate biosynthesis via DXP pathway; isopentenyl diphosphate from 1-deoxy-D-xylulose 5-phosphate: step 6/6. Functionally, catalyzes the conversion of 1-hydroxy-2-methyl-2-(E)-butenyl 4-diphosphate (HMBPP) into a mixture of isopentenyl diphosphate (IPP) and dimethylallyl diphosphate (DMAPP). Acts in the terminal step of the DOXP/MEP pathway for isoprenoid precursor biosynthesis. This Baumannia cicadellinicola subsp. Homalodisca coagulata protein is 4-hydroxy-3-methylbut-2-enyl diphosphate reductase.